A 162-amino-acid chain; its full sequence is uncharacterized protein (162 aa).

An N-terminal signal peptide occupies residues 1-21 (MRLCGLLIFLSYIVYVDNAVT).

This is an uncharacterized protein from Caenorhabditis elegans.